The sequence spans 192 residues: Ribosome maturation factor RimP (192 aa).

The protein belongs to the RimP family.

It is found in the cytoplasm. In terms of biological role, required for maturation of 30S ribosomal subunits. The chain is Ribosome maturation factor RimP from Mycobacterium sp. (strain JLS).